The chain runs to 326 residues: Phenylalanine--tRNA ligase alpha subunit (326 aa).

Residue glutamate 251 coordinates Mg(2+).

The protein belongs to the class-II aminoacyl-tRNA synthetase family. Phe-tRNA synthetase alpha subunit type 1 subfamily. In terms of assembly, tetramer of two alpha and two beta subunits. Mg(2+) serves as cofactor.

The protein resides in the cytoplasm. It catalyses the reaction tRNA(Phe) + L-phenylalanine + ATP = L-phenylalanyl-tRNA(Phe) + AMP + diphosphate + H(+). In Alteromonas mediterranea (strain DSM 17117 / CIP 110805 / LMG 28347 / Deep ecotype), this protein is Phenylalanine--tRNA ligase alpha subunit.